Here is a 90-residue protein sequence, read N- to C-terminus: U7-theraphotoxin-Hhn1b (90 aa).

A signal peptide spans 1-19 (MKTAIFTVVLALAVFAVLS). Positions 20–50 (FGWEANEKALSEEFTELIHEKEAASETEARE) are excised as a propeptide. 3 cysteine pairs are disulfide-bonded: cysteine 51–cysteine 65, cysteine 58–cysteine 70, and cysteine 64–cysteine 81.

It belongs to the neurotoxin 10 (Hwtx-1) family. 13 (Hntx-13) subfamily. Expressed by the venom gland.

Its subcellular location is the secreted. Functionally, ion channel inhibitor. This is U7-theraphotoxin-Hhn1b from Cyriopagopus hainanus (Chinese bird spider).